The sequence spans 395 residues: Cyclomarin C epoxidase CymV (395 aa).

The protein belongs to the cytochrome P450 family.

Cytochrome P450; part of the gene cluster that mediates the biosynthesis of cyclic heptapeptides, known as cyclomarins and also of cyclic dipeptides, called cyclomarazines, which have both antimicrobial and cytotoxic effects. First, CymD catalyzes the reverse N-prenylation of monomeric L-tryptophan with dimethylallyl diphosphate (DMAPP) to form N-(1,1-dimethylallyl)-tryptophan (r-N-DMAT). The N-(1,1-dimethylallyl)-tryptophan produced by CymD is then combined with a range of standard and nonproteinogenic amino acid substrates to synthesize the peptides, a process that is probably catalyzed by the non-canonical nonribosomal peptide synthetase (NRPS), CymA. Other proteins in the cluster catalyze further modifications of the peptides including CymV which catalyzes the oxidation of olefinic cyclomarins and cyclomarazines to their respective epoxide derivatives. The polypeptide is Cyclomarin C epoxidase CymV (Salinispora arenicola (strain CNS-205)).